A 522-amino-acid polypeptide reads, in one-letter code: Zinc finger protein 329 (522 aa).

Phosphoserine is present on Ser-30. 12 C2H2-type zinc fingers span residues 184-206 (YKCAECGKCFKRNSSLVLHHRTH), 212-234 (YTCNDCGKSFSKNYNLIVHRRIH), 240-262 (YKCSKCGKAFSDGSALTQHQRIH), 268-290 (YACLDCGKTFNRNSSLILHQRTH), 296-318 (YRCNECGKPFTDISHLTVHLRIH), 324-346 (YECSRCGKAFRDGSYLTQHERTH), 352-374 (FECVECGKSFSRNSHLIVHQKIH), 380-402 (YECKECGKTFIESAYLIRHQRVH), 408-430 (YGCNQCRKLFRNIAGLIRHQRIH), 436-458 (YECNQCGKAFRDSSCLTKHQRIH), 464-486 (YQCLKCGKSFRQNTHLVVHQRLH), and 492-514 (SQCPHCGKIFRRSWCLARHQRTH).

This sequence belongs to the krueppel C2H2-type zinc-finger protein family.

The protein localises to the nucleus. May be involved in transcriptional regulation. This chain is Zinc finger protein 329 (Znf329), found in Mus musculus (Mouse).